Reading from the N-terminus, the 2642-residue chain is Fusarielin synthase FSL1 (2642 aa).

One can recognise a Ketosynthase family 3 (KS3) domain in the interval 6–450; the sequence is NEPIAIIGTG…GTNAHAILEA (445 aa). Catalysis depends on for beta-ketoacyl synthase activity residues C179, H318, and H370. Residues 566 to 890 are malonyl-CoA:ACP transacylase (MAT) domain; sequence VFTGQGAQWA…PYTSALVRGK (325 aa). S659 acts as the For malonyltransferase activity in catalysis. The segment at 965–1101 is N-terminal hotdog fold; the sequence is HDLLGIQTAD…GKVCIFLQTE (137 aa). The dehydratase (DH) domain stretch occupies residues 965–1279; the sequence is HDLLGIQTAD…SFSPFAAATD (315 aa). Residues 965 to 1280 enclose the PKS/mFAS DH domain; that stretch reads HDLLGIQTAD…FSPFAAATDR (316 aa). The active-site Proton acceptor; for dehydratase activity is H997. A C-terminal hotdog fold region spans residues 1126–1280; the sequence is MAGIDVERFY…FSPFAAATDR (155 aa). The active-site Proton donor; for dehydratase activity is D1189. Residues 1423–1622 are methyltransferase (MET) domain; it reads NYLDRYYTHA…GVDTNTPMPD (200 aa). The tract at residues 2244-2423 is ketoreductase (KR) domain; it reads TYWMLGLTGD…GHNAAVIDIS (180 aa). The Carrier domain occupies 2556–2635; it reads QEVTSVLTSC…DLADYILESL (80 aa). Residue S2595 is modified to O-(pantetheine 4'-phosphoryl)serine.

Pantetheine 4'-phosphate serves as cofactor.

Its pathway is secondary metabolite biosynthesis. Its function is as follows. Reducing polyketide synthase; part of the gene cluster that mediates the biosynthesis of fusarielins F, G and H, decaketide compounds with 5 methylations and a decaline core that act as mycoestrogens as they stimulate growth of MCF-7 breast cancer cells. The initial compound in the pathway is produced by the reducing polyketide synthase FSL1. FSL1 lacks an active enoyl reductase (ER) domain and biosynthesis of fusarielins relies on the trans-acting enoyl reductase FSL5, before it is released through hydrolysis catalyzed by the thioesterase FSL2. Fusarielins F, G, and H have a C11=C12 cis double bond and is fully reduced between C10 and C11 and between C12 and C13. FSL3 can be involved in the formation of the C11=C12 cis double bond by moving a hypothetical C10=C11 or C12=C13 trans double bond to form prefusarielin. Prefusarielin is oxygenated at C15 and C16 by the cytochrome P450 monooxygenase FSL4, resulting in fusarielin F, which subsequently is epoxidized into fusarielin G by the same enzyme. The final step in the pathway is a reduction of the carboxylic acid moiety to yield fusarielin H via a still undetermined mechanism. The polypeptide is Fusarielin synthase FSL1 (Gibberella zeae (strain ATCC MYA-4620 / CBS 123657 / FGSC 9075 / NRRL 31084 / PH-1) (Wheat head blight fungus)).